A 114-amino-acid chain; its full sequence is Period circadian protein (114 aa).

The interval 23–114 (VTNTSIAGTG…VTLTESLLNK (92 aa)) is disordered. 14 consecutive repeat copies span residues 30–31 (GT), 33–34 (GT), 36–37 (GT), 38–39 (GT), 40–41 (GT), 42–43 (GT), 44–45 (GT), 46–47 (GT), 48–49 (GT), 50–51 (GT), 52–53 (GT), 54–55 (GT), 56–57 (GT), and 58–59 (GT). The segment covering 30–79 (GTGGTGGTGTGTGTGTGTGTGTGTGTGTGTDTGTGTGTGTETGTGTGTGT) has biased composition (gly residues). The tract at residues 30–87 (GTGGTGGTGTGTGTGTGTGTGTGTGTGTGTDTGTGTGTGTETGTGTGTGTRNGTNSGT) is 28 X 2 AA approximate tandem repeats of G-[TN]. A 15; approximate repeat occupies 60-61 (DT). A run of 4 repeats spans residues 62 to 63 (GT), 64 to 65 (GT), 66 to 67 (GT), and 68 to 69 (GT). The 20; approximate repeat unit spans residues 70–71 (ET). 4 consecutive repeat copies span residues 72–73 (GT), 74–75 (GT), 76–77 (GT), and 78–79 (GT). The 25; approximate repeat unit spans residues 80–81 (RN). Residues 80–91 (RNGTNSGTKTGT) are compositionally biased toward low complexity. Repeat unit 26 spans residues 82–83 (GT). One copy of the 27; approximate repeat lies at 84 to 85 (NS). Repeat unit 28 spans residues 86-87 (GT). Polar residues predominate over residues 105-114 (VTLTESLLNK).

As to quaternary structure, forms a heterodimer with timeless (TIM); the complex then translocates into the nucleus. In terms of processing, phosphorylated with a circadian rhythmicity, probably by the double-time protein (dbt). Phosphorylation could be implicated in the stability of per monomer and in the formation of heterodimer per-tim.

The protein resides in the nucleus. It is found in the cytoplasm. It localises to the perinuclear region. In terms of biological role, essential for biological clock functions. Determines the period length of circadian and ultradian rhythms; an increase in PER dosage leads to shortened circadian rhythms and a decrease leads to lengthened circadian rhythms. Essential for the circadian rhythmicity of locomotor activity, eclosion behavior, and for the rhythmic component of the male courtship song that originates in the thoracic nervous system. The biological cycle depends on the rhythmic formation and nuclear localization of the TIM-PER complex. Light induces the degradation of TIM, which promotes elimination of PER. Nuclear activity of the heterodimer coordinatively regulates PER and TIM transcription through a negative feedback loop. Behaves as a negative element in circadian transcriptional loop. Does not appear to bind DNA, suggesting indirect transcriptional inhibition. This chain is Period circadian protein (per), found in Drosophila orena (Fruit fly).